The following is a 226-amino-acid chain: Pyridoxal 5'-phosphate synthase subunit Pdx2 (226 aa).

52-54 (GES) is an L-glutamine binding site. Residue Cys-87 is the Nucleophile of the active site. Residues Arg-124 and 156-157 (IR) contribute to the L-glutamine site. Residues His-199 and Glu-201 each act as charge relay system in the active site.

This sequence belongs to the glutaminase PdxT/SNO family. As to quaternary structure, in the presence of PdxS, forms a dodecamer of heterodimers. Only shows activity in the heterodimer.

It carries out the reaction aldehydo-D-ribose 5-phosphate + D-glyceraldehyde 3-phosphate + L-glutamine = pyridoxal 5'-phosphate + L-glutamate + phosphate + 3 H2O + H(+). The catalysed reaction is L-glutamine + H2O = L-glutamate + NH4(+). The protein operates within cofactor biosynthesis; pyridoxal 5'-phosphate biosynthesis. Catalyzes the hydrolysis of glutamine to glutamate and ammonia as part of the biosynthesis of pyridoxal 5'-phosphate. The resulting ammonia molecule is channeled to the active site of PdxS. The sequence is that of Pyridoxal 5'-phosphate synthase subunit Pdx2 from Plasmodium berghei.